The primary structure comprises 160 residues: Ribosomal RNA large subunit methyltransferase H (160 aa).

Residues Leu76, Gly108, and 127-132 each bind S-adenosyl-L-methionine; that span reads LGKMTW.

The protein belongs to the RNA methyltransferase RlmH family. As to quaternary structure, homodimer.

It is found in the cytoplasm. The enzyme catalyses pseudouridine(1915) in 23S rRNA + S-adenosyl-L-methionine = N(3)-methylpseudouridine(1915) in 23S rRNA + S-adenosyl-L-homocysteine + H(+). Its function is as follows. Specifically methylates the pseudouridine at position 1915 (m3Psi1915) in 23S rRNA. This is Ribosomal RNA large subunit methyltransferase H from Rhizobium leguminosarum bv. trifolii (strain WSM2304).